Here is a 232-residue protein sequence, read N- to C-terminus: 5'-methylthioadenosine/S-adenosylhomocysteine nucleosidase (232 aa).

The active-site Proton acceptor is glutamate 12. Residues glycine 78, valine 153, and 174-175 contribute to the substrate site; that span reads ME. Aspartate 198 acts as the Proton donor in catalysis.

This sequence belongs to the PNP/UDP phosphorylase family. MtnN subfamily.

It catalyses the reaction S-adenosyl-L-homocysteine + H2O = S-(5-deoxy-D-ribos-5-yl)-L-homocysteine + adenine. The enzyme catalyses S-methyl-5'-thioadenosine + H2O = 5-(methylsulfanyl)-D-ribose + adenine. It carries out the reaction 5'-deoxyadenosine + H2O = 5-deoxy-D-ribose + adenine. The protein operates within amino-acid biosynthesis; L-methionine biosynthesis via salvage pathway; S-methyl-5-thio-alpha-D-ribose 1-phosphate from S-methyl-5'-thioadenosine (hydrolase route): step 1/2. Functionally, catalyzes the irreversible cleavage of the glycosidic bond in both 5'-methylthioadenosine (MTA) and S-adenosylhomocysteine (SAH/AdoHcy) to adenine and the corresponding thioribose, 5'-methylthioribose and S-ribosylhomocysteine, respectively. Also cleaves 5'-deoxyadenosine, a toxic by-product of radical S-adenosylmethionine (SAM) enzymes, into 5-deoxyribose and adenine. This chain is 5'-methylthioadenosine/S-adenosylhomocysteine nucleosidase, found in Photobacterium profundum (strain SS9).